The sequence spans 253 residues: Ribonuclease HII (253 aa).

The RNase H type-2 domain occupies 30-221; sequence GPVAGVDEVG…VRRLVVDGEP (192 aa). A divalent metal cation contacts are provided by Asp36, Glu37, and Asp130.

It belongs to the RNase HII family. The cofactor is Mn(2+). It depends on Mg(2+) as a cofactor.

It is found in the cytoplasm. The enzyme catalyses Endonucleolytic cleavage to 5'-phosphomonoester.. Endonuclease that specifically degrades the RNA of RNA-DNA hybrids. The chain is Ribonuclease HII from Mycolicibacterium gilvum (strain PYR-GCK) (Mycobacterium gilvum (strain PYR-GCK)).